Consider the following 239-residue polypeptide: Large ribosomal subunit protein uL2 (239 aa).

The interval 200–239 is disordered; the sequence is VNHPHGGKEHHIGRPSTVSRRAPPGRKVGHIAARRTGRRK. Positions 222–239 are enriched in basic residues; sequence PPGRKVGHIAARRTGRRK.

This sequence belongs to the universal ribosomal protein uL2 family. Part of the 50S ribosomal subunit. Forms a bridge to the 30S subunit in the 70S ribosome.

One of the primary rRNA binding proteins. Required for association of the 30S and 50S subunits to form the 70S ribosome, for tRNA binding and peptide bond formation. It has been suggested to have peptidyltransferase activity; this is somewhat controversial. Makes several contacts with the 16S rRNA in the 70S ribosome. This Thermococcus gammatolerans (strain DSM 15229 / JCM 11827 / EJ3) protein is Large ribosomal subunit protein uL2.